We begin with the raw amino-acid sequence, 827 residues long: Beta-galactosidase 1 (827 aa).

The N-terminal stretch at 1–25 (MMGRRGSSWCRWWVALLVLAVAADA) is a signal peptide. The active-site Proton donor is the Glu-187. N-linked (GlcNAc...) asparagine glycosylation is found at Asn-198 and Asn-249. The Nucleophile role is filled by Glu-259. 8 N-linked (GlcNAc...) asparagine glycosylation sites follow: Asn-260, Asn-366, Asn-392, Asn-502, Asn-520, Asn-578, Asn-586, and Asn-615. The region spanning 746–827 (GEAGDAVTLS…SGVLTVQATC (82 aa)) is the SUEL-type lectin domain.

It belongs to the glycosyl hydrolase 35 family.

The protein localises to the secreted. Its subcellular location is the extracellular space. It localises to the apoplast. It carries out the reaction Hydrolysis of terminal non-reducing beta-D-galactose residues in beta-D-galactosides.. This Oryza sativa subsp. japonica (Rice) protein is Beta-galactosidase 1.